A 740-amino-acid polypeptide reads, in one-letter code: 1,4-alpha-glucan branching enzyme GlgB (740 aa).

The active-site Nucleophile is the D414. E467 serves as the catalytic Proton donor.

Belongs to the glycosyl hydrolase 13 family. GlgB subfamily. In terms of assembly, monomer.

The enzyme catalyses Transfers a segment of a (1-&gt;4)-alpha-D-glucan chain to a primary hydroxy group in a similar glucan chain.. It functions in the pathway glycan biosynthesis; glycogen biosynthesis. Its function is as follows. Catalyzes the formation of the alpha-1,6-glucosidic linkages in glycogen by scission of a 1,4-alpha-linked oligosaccharide from growing alpha-1,4-glucan chains and the subsequent attachment of the oligosaccharide to the alpha-1,6 position. This Rhodospirillum rubrum (strain ATCC 11170 / ATH 1.1.1 / DSM 467 / LMG 4362 / NCIMB 8255 / S1) protein is 1,4-alpha-glucan branching enzyme GlgB.